Consider the following 57-residue polypeptide: MLRWSSTYTFGLLWLIIGSEAFHLNALKQDHLERMKQYDAKIRLAKHEFDDTSNETK.

The chain crosses the membrane as a helical span at residues 10–27 (FGLLWLIIGSEAFHLNAL). Residues 28-55 (KQDHLERMKQYDAKIRLAKHEFDDTSNE) are a coiled coil.

Its subcellular location is the membrane. This is an uncharacterized protein from Schizosaccharomyces pombe (strain 972 / ATCC 24843) (Fission yeast).